The chain runs to 565 residues: NAD-dependent malic enzyme (565 aa).

Tyrosine 104 acts as the Proton donor in catalysis. Arginine 157 is an NAD(+) binding site. Lysine 175 serves as the catalytic Proton acceptor. Residues glutamate 246, aspartate 247, and aspartate 270 each coordinate a divalent metal cation. Positions 270 and 418 each coordinate NAD(+).

It belongs to the malic enzymes family. As to quaternary structure, homotetramer. Mg(2+) serves as cofactor. Mn(2+) is required as a cofactor.

It catalyses the reaction (S)-malate + NAD(+) = pyruvate + CO2 + NADH. The enzyme catalyses oxaloacetate + H(+) = pyruvate + CO2. The polypeptide is NAD-dependent malic enzyme (Escherichia coli (strain K12 / MC4100 / BW2952)).